Consider the following 194-residue polypeptide: HTH-type transcriptional regulator BetI (194 aa).

Residues glutamate 8 to leucine 68 enclose the HTH tetR-type domain. Positions threonine 31–phenylalanine 50 form a DNA-binding region, H-T-H motif.

The protein operates within amine and polyamine biosynthesis; betaine biosynthesis via choline pathway [regulation]. Repressor involved in the biosynthesis of the osmoprotectant glycine betaine. It represses transcription of the choline transporter BetT and the genes of BetAB involved in the synthesis of glycine betaine. The protein is HTH-type transcriptional regulator BetI of Burkholderia cenocepacia (strain HI2424).